Here is a 300-residue protein sequence, read N- to C-terminus: Protein p34 (300 aa).

Transmembrane regions (helical) follow at residues tyrosine 14–threonine 34, isoleucine 39–alanine 59, serine 87–isoleucine 107, isoleucine 119–isoleucine 139, and leucine 170–phenylalanine 190.

The protein belongs to the cation diffusion facilitator (CDF) transporter (TC 2.A.4) family.

It is found in the cell membrane. This Rickettsia prowazekii (strain Madrid E) protein is Protein p34 (p34).